We begin with the raw amino-acid sequence, 87 residues long: Acylphosphatase (87 aa).

The Acylphosphatase-like domain occupies 1–87 (MAWVHGRVQG…EDYQDFRIRY (87 aa)). Catalysis depends on residues Arg14 and Asn32.

It belongs to the acylphosphatase family.

The catalysed reaction is an acyl phosphate + H2O = a carboxylate + phosphate + H(+). In Cronobacter sakazakii (strain ATCC BAA-894) (Enterobacter sakazakii), this protein is Acylphosphatase (acyP).